The chain runs to 483 residues: MLTLDTLNVMLAVSEEGLIEEMIIALLASPQLAVFFEKFPRLKAAITDDVPRWREALRSRLKDARVPPELTEEVMCYQQSQLLSTPQFIVQLPQILDLLHRLNSPWAEQARQLVDANSTITSALHTLFLQRWRLSLIVQATTLNQQLLEEEREQLLSEVQERMTLSGQLEPILADNNTAAGRLWDMSAGQLKRGDYQFIVKYGEFLNEQPELKRLAEQLGRSREAKSIPRNDAQMETFRTMVREPATVPEQVDGLQQSDDILRLLPPELAKLGITELEYEFYRRLVEKQLLTYRLHGESWREKVFERPVVHKDYDEQPRGPFIVCVDTSGSMGGFNEQCAKAFCLALMRIALAENRRCYIMLFSTEIVRYELSGPQGIEQAIRFLSQQFRGGTDLASCFRAIMERLQSREWFDADAVVISDFIAQRLPDDVTSKVKELQRVHQHRFHAVAMSAHGKPGIMRIFDHIWRFDTGMRSRLLRRWRR.

The protein belongs to the ViaA family. In terms of assembly, homodimer. Interacts with RavA.

It localises to the cytoplasm. Component of the RavA-ViaA chaperone complex, which may act on the membrane to optimize the function of some of the respiratory chains. ViaA stimulates the ATPase activity of RavA. The sequence is that of Regulatory protein ViaA from Shigella flexneri.